The following is a 260-amino-acid chain: Tetraspanin-14 (260 aa).

Residues 1-10 (MKSQSHKPWN) are Cytoplasmic-facing. A helical membrane pass occupies residues 11-31 (LVAGIFFPIITFFLSAPLVGH). Residues 32-54 (ALYLFCMRNDHVYYRDFQSTLPR) are Extracellular-facing. A helical membrane pass occupies residues 55–75 (VQTLVSVSLLALFLLSNIGMF). The Cytoplasmic portion of the chain corresponds to 76–80 (LRPRR). Residues 81–101 (LSYFLVIVFFIGFAYSGVYKM) traverse the membrane as a helical segment. Topologically, residues 102–260 (ESRRFSPTPM…FLSSLTSLFR (159 aa)) are extracellular. An N-linked (GlcNAc...) asparagine glycan is attached at Asn182.

Belongs to the tetraspanin (TM4SF) family.

The protein localises to the membrane. Functionally, may be involved in the regulation of cell differentiation. This Arabidopsis thaliana (Mouse-ear cress) protein is Tetraspanin-14 (TET14).